Reading from the N-terminus, the 634-residue chain is 1-deoxy-D-xylulose-5-phosphate synthase (634 aa).

Residues His-74 and Ala-115–Ser-117 contribute to the thiamine diphosphate site. Asp-146 is a binding site for Mg(2+). Residues Gly-147–Ala-148, Asn-176, Tyr-283, and Glu-365 each bind thiamine diphosphate. Asn-176 lines the Mg(2+) pocket.

Belongs to the transketolase family. DXPS subfamily. As to quaternary structure, homodimer. The cofactor is Mg(2+). Thiamine diphosphate is required as a cofactor.

The catalysed reaction is D-glyceraldehyde 3-phosphate + pyruvate + H(+) = 1-deoxy-D-xylulose 5-phosphate + CO2. It functions in the pathway metabolic intermediate biosynthesis; 1-deoxy-D-xylulose 5-phosphate biosynthesis; 1-deoxy-D-xylulose 5-phosphate from D-glyceraldehyde 3-phosphate and pyruvate: step 1/1. Its function is as follows. Catalyzes the acyloin condensation reaction between C atoms 2 and 3 of pyruvate and glyceraldehyde 3-phosphate to yield 1-deoxy-D-xylulose-5-phosphate (DXP). In Burkholderia pseudomallei (strain 668), this protein is 1-deoxy-D-xylulose-5-phosphate synthase.